The following is a 585-amino-acid chain: Conglutin alpha 3 (585 aa).

Residues 1 to 23 (MANPFLLSLSLCLVLLYTSACLG) form the signal peptide. Intrachain disulfides connect cysteine 32–cysteine 65 and cysteine 108–cysteine 406. The 222-residue stretch at 37–258 (LNALEPDNRI…ALNIDEDTVH (222 aa)) folds into the Cupin type-1 1 domain. Disordered regions lie at residues 113-147 (EEAQQSQSRQERRRGQRSQSQEQEDSHQKIRHFRE), 199-240 (EEYP…ILSG), and 283-402 (KWQE…NGLE). Positions 136–147 (EDSHQKIRHFRE) are enriched in basic and acidic residues. The segment covering 211 to 224 (RQQHQRPSGRRHGQ) has biased composition (basic residues). Residues 309 to 320 (REEEEKEEEDEP) are compositionally biased toward acidic residues. Positions 338-350 (ERGRGRGGSEWKR) are enriched in basic and acidic residues. The region spanning 412–558 (ENIADPTRAD…AFRLSLNQVS (147 aa)) is the Cupin type-1 2 domain. Residues 565-579 (NHNPLVTPQSQSQDH) show a composition bias toward polar residues. The segment at 565–585 (NHNPLVTPQSQSQDHNLVKVA) is disordered.

Belongs to the 11S seed storage protein (globulins) family. Hexamer; each subunit is composed of an acidic and a basic chain derived from a single precursor and linked by a disulfide bond. Component of globulins complexes which accumulate in seeds.

Its function is as follows. Sulfur-rich seed storage protein. This protein found in the seeds of many leguminous and non-leguminous plants is the source of sulfur-containing amino acids in seed meals. The protein is Conglutin alpha 3 of Lupinus angustifolius (Narrow-leaved blue lupine).